The chain runs to 77 residues: UPF0401 protein c0279 (77 aa).

Belongs to the UPF0401 family.

The protein is UPF0401 protein c0279 of Escherichia coli O6:H1 (strain CFT073 / ATCC 700928 / UPEC).